The primary structure comprises 103 residues: Histone H4 (103 aa).

Gly residues predominate over residues M1–G14. The disordered stretch occupies residues M1–R20. Position 6 is an N6-acetyl-N6-methyllysine; alternate (K6). Residues K6, K9, and K13 each carry the N6-methyllysine; alternate modification. Residue K13 is modified to N6-acetyl-N6-methyllysine; alternate. Residues K17–K21 mediate DNA binding. Residue K92 is modified to N6-glutaryllysine.

Belongs to the histone H4 family. The nucleosome is a histone octamer containing two molecules each of H2A, H2B, H3 and H4 assembled in one H3-H4 heterotetramer and two H2A-H2B heterodimers. The octamer wraps approximately 147 bp of DNA. Glutarylation at Lys-92 (H4K91glu) destabilizes nucleosomes by promoting dissociation of the H2A-H2B dimers from nucleosomes.

The protein localises to the nucleus. It is found in the chromosome. Core component of nucleosome. Nucleosomes wrap and compact DNA into chromatin, limiting DNA accessibility to the cellular machineries which require DNA as a template. Histones thereby play a central role in transcription regulation, DNA repair, DNA replication and chromosomal stability. DNA accessibility is regulated via a complex set of post-translational modifications of histones, also called histone code, and nucleosome remodeling. This is Histone H4 (HHF1) from Candida glabrata (strain ATCC 2001 / BCRC 20586 / JCM 3761 / NBRC 0622 / NRRL Y-65 / CBS 138) (Yeast).